Consider the following 448-residue polypeptide: Antizyme inhibitor 1 (448 aa).

This sequence belongs to the Orn/Lys/Arg decarboxylase class-II family. ODC antizyme inhibitor subfamily. Monomer. Interacts with OAZ1 and OAZ3; this interaction disrupts the interaction between the antizyme and ODC1. In terms of processing, ubiquitinated, leading to its proteasomal degradation; a process that is reduced in presence of antizyme OAZ1. In terms of tissue distribution, expressed during testis development.

Its subcellular location is the nucleus. In terms of biological role, antizyme inhibitor (AZI) protein that positively regulates ornithine decarboxylase (ODC) activity and polyamine uptake. AZI is an enzymatically inactive ODC homolog that counteracts the negative effect of ODC antizymes (AZs) OAZ1, OAZ2 and OAZ3 on ODC activity by competing with ODC for antizyme-binding. Inhibits antizyme-dependent ODC degradation and releases ODC monomers from their inactive complex with antizymes, leading to formation of the catalytically active ODC homodimer and restoring polyamine production. This is Antizyme inhibitor 1 (Azin1) from Mus musculus (Mouse).